The chain runs to 223 residues: Large ribosomal subunit protein uL3 (223 aa).

This sequence belongs to the universal ribosomal protein uL3 family. As to quaternary structure, part of the 50S ribosomal subunit. Forms a cluster with proteins L14 and L19.

One of the primary rRNA binding proteins, it binds directly near the 3'-end of the 23S rRNA, where it nucleates assembly of the 50S subunit. In Nocardioides sp. (strain ATCC BAA-499 / JS614), this protein is Large ribosomal subunit protein uL3.